An 813-amino-acid chain; its full sequence is Phenylalanine--tRNA ligase beta subunit (813 aa).

The 110-residue stretch at 42-151 folds into the tRNA-binding domain; the sequence is AKDFNHVVIG…ADAPVGKAYA (110 aa). The B5 domain maps to 405 to 480; sequence VKKAPVDITI…RLNGYEHIPE (76 aa). 4 residues coordinate Mg(2+): D458, D464, E467, and E468. Residues 720-813 form the FDX-ACB domain; sequence SKFPIVERDF…LKKNFDLSVR (94 aa).

The protein belongs to the phenylalanyl-tRNA synthetase beta subunit family. Type 1 subfamily. Tetramer of two alpha and two beta subunits. Mg(2+) serves as cofactor.

It localises to the cytoplasm. It carries out the reaction tRNA(Phe) + L-phenylalanine + ATP = L-phenylalanyl-tRNA(Phe) + AMP + diphosphate + H(+). The sequence is that of Phenylalanine--tRNA ligase beta subunit from Bdellovibrio bacteriovorus (strain ATCC 15356 / DSM 50701 / NCIMB 9529 / HD100).